The sequence spans 407 residues: Phosphonoacetate hydrolase (407 aa).

Aspartate 25, threonine 64, aspartate 202, histidine 206, aspartate 241, histidine 242, and histidine 368 together coordinate Zn(2+). Threonine 64 and aspartate 202 together coordinate substrate. Residues histidine 242 and histidine 368 each coordinate substrate.

Belongs to the alkaline phosphatase family. PhnA subfamily. As to quaternary structure, homodimer. Zn(2+) serves as cofactor.

The enzyme catalyses phosphonoacetate + H2O = acetate + phosphate + H(+). With respect to regulation, completely inhibited by EDTA and 1,10-phenanthroline. Moderately inhibited by the phosphonocarboxylic acids phosphonoformate and 3-phosphonopropionate and the phosphonate herbicide glyphosate. Partially inhibited by the reducing agents sodium sulfide and dithiotheitol and the chelating agent iminodiacetate. Nonphosphonate analogs of phosphonoacetate, such as arsonoacetate, sulfonoacetate and malonate are poor inhibitors. Inorganic phosphate, acetate and the known phosphonotase inhibitor phosphite have little effect on activity. Not inhibited by the alkylphosphonic acids methylphosphonate and ethylphosphonate, or the aminoalkylphosphonates 2-aminoethylphosphonate, 3-aminopropylphosphonate and 4-aminobutylphosphonate. Fe(3+), Ca(2+), Mg(2+) and Cs(+) have no effect on activity. Activity is slightly increased by the aminoalkylphosphonates 1-aminoethylphosphonate, 1-aminobutylphosphonate, 2-amino-4-butylphosphonate. Activity is increased by Zn(2+), Mn(2+) and Co(2+), these 3 metal ions also allow recovery of activity after EDTA treatment. Specifically hydrolyzes phosphonoacetate. Does not have activity on other organophosphonates or acetates. This chain is Phosphonoacetate hydrolase, found in Pseudomonas fluorescens.